We begin with the raw amino-acid sequence, 181 residues long: Malignant T-cell-amplified sequence 2 (181 aa).

The PUA domain maps to 92-171; that stretch reads LPHQQVDKGA…IGIENIHYLN (80 aa).

Belongs to the MCTS1 family.

The protein localises to the cytoplasm. This chain is Malignant T-cell-amplified sequence 2, found in Mus musculus (Mouse).